A 465-amino-acid polypeptide reads, in one-letter code: Ribulose bisphosphate carboxylase large chain (465 aa).

K4 bears the N6,N6,N6-trimethyllysine mark. N113 and T163 together coordinate substrate. The active-site Proton acceptor is the K165. Residue K167 participates in substrate binding. 3 residues coordinate Mg(2+): K191, D193, and E194. K191 carries the N6-carboxylysine modification. The active-site Proton acceptor is the H284. 3 residues coordinate substrate: R285, H317, and S369.

The protein belongs to the RuBisCO large chain family. Type I subfamily. Heterohexadecamer of 8 large chains and 8 small chains; disulfide-linked. The disulfide link is formed within the large subunit homodimers. Mg(2+) is required as a cofactor. The disulfide bond which can form in the large chain dimeric partners within the hexadecamer appears to be associated with oxidative stress and protein turnover.

It localises to the plastid. The protein localises to the chloroplast. The catalysed reaction is 2 (2R)-3-phosphoglycerate + 2 H(+) = D-ribulose 1,5-bisphosphate + CO2 + H2O. It carries out the reaction D-ribulose 1,5-bisphosphate + O2 = 2-phosphoglycolate + (2R)-3-phosphoglycerate + 2 H(+). In terms of biological role, ruBisCO catalyzes two reactions: the carboxylation of D-ribulose 1,5-bisphosphate, the primary event in carbon dioxide fixation, as well as the oxidative fragmentation of the pentose substrate in the photorespiration process. Both reactions occur simultaneously and in competition at the same active site. This Securidaca diversifolia (Easter flower) protein is Ribulose bisphosphate carboxylase large chain.